Reading from the N-terminus, the 399-residue chain is S-adenosylmethionine synthase (399 aa).

His-17 lines the ATP pocket. Asp-19 contacts Mg(2+). Glu-45 is a binding site for K(+). L-methionine-binding residues include Glu-58 and Gln-101. The flexible loop stretch occupies residues 101–111 (QSADIAMGVDQ). ATP-binding positions include 177–179 (DGK), 244–245 (RF), Asp-253, 259–260 (RK), Ala-276, and Lys-280. Asp-253 is an L-methionine binding site. Lys-284 contacts L-methionine.

Belongs to the AdoMet synthase family. As to quaternary structure, homotetramer; dimer of dimers. Mg(2+) serves as cofactor. It depends on K(+) as a cofactor.

The protein localises to the cytoplasm. It carries out the reaction L-methionine + ATP + H2O = S-adenosyl-L-methionine + phosphate + diphosphate. Its pathway is amino-acid biosynthesis; S-adenosyl-L-methionine biosynthesis; S-adenosyl-L-methionine from L-methionine: step 1/1. In terms of biological role, catalyzes the formation of S-adenosylmethionine (AdoMet) from methionine and ATP. The overall synthetic reaction is composed of two sequential steps, AdoMet formation and the subsequent tripolyphosphate hydrolysis which occurs prior to release of AdoMet from the enzyme. The chain is S-adenosylmethionine synthase from Bacillus thuringiensis subsp. konkukian (strain 97-27).